The following is a 131-amino-acid chain: Profilin-1 (131 aa).

This sequence belongs to the profilin family. As to quaternary structure, occurs in many kinds of cells as a complex with monomeric actin in a 1:1 ratio. As to expression, cytoplasmic distribution in hypocotyls. In root nodules, it is found in all cells, but is more abundant in the vascular tissue as well as the endodermis.

It is found in the cytoplasm. It localises to the cytoskeleton. Functionally, binds to actin and affects the structure of the cytoskeleton. At high concentrations, profilin prevents the polymerization of actin, whereas it enhances it at low concentrations. By binding to PIP2, it inhibits the formation of IP3 and DG. This chain is Profilin-1, found in Phaseolus vulgaris (Kidney bean).